A 70-amino-acid polypeptide reads, in one-letter code: ATP synthase subunit epsilon, mitochondrial (70 aa).

This sequence belongs to the eukaryotic ATPase epsilon family. As to quaternary structure, F-type ATPases have 2 components, CF(1) - the catalytic core - and CF(0) - the membrane proton channel. CF(1) has five subunits: alpha(3), beta(3), gamma(1), delta(1), epsilon(1). CF(0) has three main subunits: a, b and c.

Its subcellular location is the mitochondrion. The protein localises to the mitochondrion inner membrane. Functionally, mitochondrial membrane ATP synthase (F(1)F(0) ATP synthase or Complex V) produces ATP from ADP in the presence of a proton gradient across the membrane which is generated by electron transport complexes of the respiratory chain. F-type ATPases consist of two structural domains, F(1) - containing the extramembraneous catalytic core, and F(0) - containing the membrane proton channel, linked together by a central stalk and a peripheral stalk. During catalysis, ATP synthesis in the catalytic domain of F(1) is coupled via a rotary mechanism of the central stalk subunits to proton translocation. Part of the complex F(1) domain and of the central stalk which is part of the complex rotary element. Rotation of the central stalk against the surrounding alpha(3)beta(3) subunits leads to hydrolysis of ATP in three separate catalytic sites on the beta subunits. The protein is ATP synthase subunit epsilon, mitochondrial of Zea mays (Maize).